We begin with the raw amino-acid sequence, 482 residues long: Bifunctional protein GlmU (482 aa).

The tract at residues 1–238 (MSAIRPAAVV…HREIAGINNR (238 aa)) is pyrophosphorylase. Residues 12 to 15 (LAAG), K26, Q79, and 84 to 85 (GT) each bind UDP-N-acetyl-alpha-D-glucosamine. D110 contacts Mg(2+). UDP-N-acetyl-alpha-D-glucosamine contacts are provided by G147, E163, N178, and N236. Mg(2+) is bound at residue N236. The tract at residues 239-259 (VQLAEARRILNDRLLTGAMLA) is linker. The segment at 260 to 482 (GVTVVDPATT…AVSREADGED (223 aa)) is N-acetyltransferase. R341 and K359 together coordinate UDP-N-acetyl-alpha-D-glucosamine. The Proton acceptor role is filled by H371. Positions 374 and 385 each coordinate UDP-N-acetyl-alpha-D-glucosamine. Acetyl-CoA-binding positions include A388, 394-395 (NY), S413, A431, and R448. Residues 460-482 (RKRPGSAAAKAAEAVSREADGED) form a disordered region. The segment covering 464 to 473 (GSAAAKAAEA) has biased composition (low complexity).

In the N-terminal section; belongs to the N-acetylglucosamine-1-phosphate uridyltransferase family. It in the C-terminal section; belongs to the transferase hexapeptide repeat family. Homotrimer. Mg(2+) is required as a cofactor.

The protein localises to the cytoplasm. The enzyme catalyses alpha-D-glucosamine 1-phosphate + acetyl-CoA = N-acetyl-alpha-D-glucosamine 1-phosphate + CoA + H(+). It catalyses the reaction N-acetyl-alpha-D-glucosamine 1-phosphate + UTP + H(+) = UDP-N-acetyl-alpha-D-glucosamine + diphosphate. Its pathway is nucleotide-sugar biosynthesis; UDP-N-acetyl-alpha-D-glucosamine biosynthesis; N-acetyl-alpha-D-glucosamine 1-phosphate from alpha-D-glucosamine 6-phosphate (route II): step 2/2. It functions in the pathway nucleotide-sugar biosynthesis; UDP-N-acetyl-alpha-D-glucosamine biosynthesis; UDP-N-acetyl-alpha-D-glucosamine from N-acetyl-alpha-D-glucosamine 1-phosphate: step 1/1. The protein operates within bacterial outer membrane biogenesis; LPS lipid A biosynthesis. Functionally, catalyzes the last two sequential reactions in the de novo biosynthetic pathway for UDP-N-acetylglucosamine (UDP-GlcNAc). The C-terminal domain catalyzes the transfer of acetyl group from acetyl coenzyme A to glucosamine-1-phosphate (GlcN-1-P) to produce N-acetylglucosamine-1-phosphate (GlcNAc-1-P), which is converted into UDP-GlcNAc by the transfer of uridine 5-monophosphate (from uridine 5-triphosphate), a reaction catalyzed by the N-terminal domain. This is Bifunctional protein GlmU from Streptomyces coelicolor (strain ATCC BAA-471 / A3(2) / M145).